The chain runs to 396 residues: Elongation factor Tu 1 (396 aa).

The region spanning 10–206 (KPHCNIGTIG…TVDDYIPQPD (197 aa)) is the tr-type G domain. Residues 19–26 (GHVDHGKT) form a G1 region. 19–26 (GHVDHGKT) lines the GTP pocket. Thr26 serves as a coordination point for Mg(2+). Residues 60–64 (GITIN) are G2. The G3 stretch occupies residues 81–84 (DCPG). GTP is bound by residues 81–85 (DCPGH) and 136–139 (NKVD). Positions 136 to 139 (NKVD) are G4. The interval 174–176 (SAK) is G5.

It belongs to the TRAFAC class translation factor GTPase superfamily. Classic translation factor GTPase family. EF-Tu/EF-1A subfamily. As to quaternary structure, monomer.

It is found in the cytoplasm. It carries out the reaction GTP + H2O = GDP + phosphate + H(+). In terms of biological role, GTP hydrolase that promotes the GTP-dependent binding of aminoacyl-tRNA to the A-site of ribosomes during protein biosynthesis. This is Elongation factor Tu 1 from Caulobacter sp. (strain K31).